Consider the following 308-residue polypeptide: uncharacterized protein (308 aa).

Residues 5-236 form the ABC transporter domain; sequence LELQQLKKTY…LKSETFILDL (232 aa). 38-45 serves as a coordination point for ATP; sequence GPNGAGKS.

It belongs to the ABC transporter superfamily.

This is an uncharacterized protein from Escherichia coli (strain K12).